Here is a 206-residue protein sequence, read N- to C-terminus: ATP-dependent Clp protease proteolytic subunit 1 (206 aa).

S103 acts as the Nucleophile in catalysis. The active site involves H128.

This sequence belongs to the peptidase S14 family. As to quaternary structure, fourteen ClpP subunits assemble into 2 heptameric rings which stack back to back to give a disk-like structure with a central cavity, resembling the structure of eukaryotic proteasomes.

The protein localises to the cytoplasm. The catalysed reaction is Hydrolysis of proteins to small peptides in the presence of ATP and magnesium. alpha-casein is the usual test substrate. In the absence of ATP, only oligopeptides shorter than five residues are hydrolyzed (such as succinyl-Leu-Tyr-|-NHMec, and Leu-Tyr-Leu-|-Tyr-Trp, in which cleavage of the -Tyr-|-Leu- and -Tyr-|-Trp bonds also occurs).. Its function is as follows. Cleaves peptides in various proteins in a process that requires ATP hydrolysis. Has a chymotrypsin-like activity. Plays a major role in the degradation of misfolded proteins. In Protochlamydia amoebophila (strain UWE25), this protein is ATP-dependent Clp protease proteolytic subunit 1.